We begin with the raw amino-acid sequence, 313 residues long: MASFRKLTLSEKVPPNHPSRKKVNFLDMSLDDIIIYKELEGTNAEEEKNKRQNHSKKESPSRQQSKAHRHRHRRGYSRCRSNSEEGNHDKKPSQKPSGFKSGQHPLNGQPLIEQEKCSDNYEAQAEKNQGQSEGNQHQSEGNPDKSEESQGQPEENHHSERSRNHLERSLSQSDRSQGQLKRHHPQYERSHGQYKRSHGQSERSHGHSERSHGHSERSHGHSERSHGHSKRSRSQGDLVDTQSDLIATQRDLIATQKDLIATQRDLIATQRDLIVTQRDLVATERDLINQSGRSHGQSERHQRYSTGKNTITT.

The tract at residues 1 to 119 is interaction with DDX39B/UAP56; the sequence is MASFRKLTLS…PLIEQEKCSD (119 aa). 2 disordered regions span residues 1-238 and 290-313; these read MASF…QGDL and QSGR…TITT. The short motif at 22-40 is the UAP56-binding motif (UBM); required for proper nuclear localization element; it reads KVNFLDMSLDDIIIYKELE. Residues 34–60 show a composition bias toward basic and acidic residues; it reads IIYKELEGTNAEEEKNKRQNHSKKESP. Residues 51–80 form an arg-rich; required for RNA-binding region; the sequence is RQNHSKKESPSRQQSKAHRHRHRRGYSRCR. The span at 65 to 77 shows a compositional bias: basic residues; the sequence is SKAHRHRHRRGYS. A compositionally biased stretch (basic and acidic residues) spans 81 to 92; sequence SNSEEGNHDKKP. Polar residues predominate over residues 126–141; that stretch reads EKNQGQSEGNQHQSEG. Residues 142-168 show a composition bias toward basic and acidic residues; the sequence is NPDKSEESQGQPEENHHSERSRNHLER. Polar residues predominate over residues 169–179; it reads SLSQSDRSQGQ. The interval 178–236 is RS-containing His-rich (RS-H); necessary for nuclear localization; sequence GQLKRHHPQYERSHGQYKRSHGQSERSHGHSERSHGHSERSHGHSERSHGHSKRSRSQG. The span at 199 to 226 shows a compositional bias: basic and acidic residues; it reads GQSERSHGHSERSHGHSERSHGHSERSH. A Phosphoserine modification is found at Ser234. Positions 238–287 are leucine-zipper; required for RNA-binding and for its relocalization to the cytoplasm during cell division; the sequence is LVDTQSDLIATQRDLIATQKDLIATQRDLIATQRDLIVTQRDLVATERDL. The segment at 241–313 is interaction with NXF1; it reads TQSDLIATQR…YSTGKNTITT (73 aa). Residues 304-313 are compositionally biased toward polar residues; sequence YSTGKNTITT.

As to quaternary structure, interacts with NXF1, NXF2, THOC1, THOC5, DDX39B/UAP56 and SRRT. As to expression, expressed specifically in testis. Also expressed in a wide variety of cancer types, but particularly high levels of expression observed in melanoma cells.

It localises to the nucleus. The protein resides in the cytoplasm. In terms of biological role, export adapter involved in mRNA nuclear export in cancer cells. Binds and enhances the RNA-binding activity of the nuclear RNA export factor NXF1. Can restore mRNA export function in cells compromised by loss of mRNA export adapters. In Homo sapiens (Human), this protein is Leucine zipper protein 4 (LUZP4).